Reading from the N-terminus, the 536-residue chain is Lysosomal acid glucosylceramidase (536 aa).

The signal sequence occupies residues Met-1 to Gly-39. 2 disulfide bridges follow: Cys-43–Cys-55 and Cys-57–Cys-62. Residues Asn-58, Asn-98, and Asn-185 are each glycosylated (N-linked (GlcNAc...) asparagine). Catalysis depends on Glu-274, which acts as the Proton donor. Asn-309 carries an N-linked (GlcNAc...) asparagine glycan. Residue Glu-379 is the Nucleophile of the active site. Asn-501 carries N-linked (GlcNAc...) asparagine glycosylation.

Belongs to the glycosyl hydrolase 30 family. In terms of assembly, interacts with saposin-C. Interacts with SCARB2. Interacts with TCP1. Interacts with GRN; this interaction prevents aggregation of GBA1-SCARB2 complex via interaction with HSPA1A upon stress.

Its subcellular location is the lysosome membrane. The enzyme catalyses a beta-D-glucosyl-(1&lt;-&gt;1')-N-acylsphing-4-enine + H2O = an N-acylsphing-4-enine + D-glucose. It catalyses the reaction a beta-D-galactosyl-(1&lt;-&gt;1')-N-acylsphing-4-enine + H2O = an N-acylsphing-4-enine + D-galactose. The catalysed reaction is cholesteryl 3-beta-D-glucoside + H2O = cholesterol + D-glucose. It carries out the reaction a beta-D-glucosyl-(1&lt;-&gt;1')-N-acylsphing-4-enine + cholesterol = cholesteryl 3-beta-D-glucoside + an N-acylsphing-4-enine. The enzyme catalyses beta-D-glucosyl-N-(9Z-octadecenoyl)-sphing-4E-enine + cholesterol = N-(9Z-octadecenoyl)-sphing-4-enine + cholesteryl 3-beta-D-glucoside. It catalyses the reaction beta-D-glucosyl-N-octanoylsphing-4E-enine + cholesterol = N-octanoylsphing-4-enine + cholesteryl 3-beta-D-glucoside. The catalysed reaction is beta-D-glucosyl-N-dodecanoylsphing-4-enine + cholesterol = N-dodecanoylsphing-4-enine + cholesteryl 3-beta-D-glucoside. It carries out the reaction beta-D-glucosyl-(1&lt;-&gt;1)-N-octadecanoylsphing-4-enine + cholesterol = N-octadecanoylsphing-4-enine + cholesteryl 3-beta-D-glucoside. The enzyme catalyses beta-D-glucosyl-(1&lt;-&gt;1')-N-(15Z-tetracosenoyl)-sphing-4-enine + cholesterol = N-(15Z-tetracosenoyl)-sphing-4-enine + cholesteryl 3-beta-D-glucoside. It catalyses the reaction a beta-D-galactosyl-(1&lt;-&gt;1')-N-acylsphing-4-enine + cholesterol = cholesteryl 3-beta-D-galactoside + an N-acylsphing-4-enine. The catalysed reaction is 1-(beta-D-galactosyl)-N-dodecanoylsphing-4-enine + cholesterol = cholesteryl 3-beta-D-galactoside + N-dodecanoylsphing-4-enine. It carries out the reaction a beta-D-xylosyl-(1&lt;-&gt;1')-N-acylsphing-4-enine + cholesterol = cholesteryl 3-beta-D-xyloside + an N-acylsphing-4-enine. The enzyme catalyses beta-D-xylosyl-(1&lt;-&gt;1')-N-(9Z-octadecenoyl)-sphing-4-enine + cholesterol = cholesteryl 3-beta-D-xyloside + N-(9Z-octadecenoyl)-sphing-4-enine. The protein operates within steroid metabolism; cholesterol metabolism. Its pathway is sphingolipid metabolism. Its function is as follows. Glucosylceramidase that catalyzes, within the lysosomal compartment, the hydrolysis of glucosylceramides/GlcCers (such as beta-D-glucosyl-(1&lt;-&gt;1')-N-acylsphing-4-enine) into free ceramides (such as N-acylsphing-4-enine) and glucose. Plays a central role in the degradation of complex lipids and the turnover of cellular membranes. Through the production of ceramides, participates in the PKC-activated salvage pathway of ceramide formation. Catalyzes the glucosylation of cholesterol, through a transglucosylation reaction where glucose is transferred from GlcCer to cholesterol. GlcCer containing mono-unsaturated fatty acids (such as beta-D-glucosyl-N-(9Z-octadecenoyl)-sphing-4-enine) are preferred as glucose donors for cholesterol glucosylation when compared with GlcCer containing same chain length of saturated fatty acids (such as beta-D-glucosyl-N-octadecanoyl-sphing-4-enine). Under specific conditions, may alternatively catalyze the reverse reaction, transferring glucose from cholesteryl 3-beta-D-glucoside to ceramide. Can also hydrolyze cholesteryl 3-beta-D-glucoside producing glucose and cholesterol. Catalyzes the hydrolysis of galactosylceramides/GalCers (such as beta-D-galactosyl-(1&lt;-&gt;1')-N-acylsphing-4-enine), as well as the transfer of galactose between GalCers and cholesterol in vitro, but with lower activity than with GlcCers. Contrary to GlcCer and GalCer, xylosylceramide/XylCer (such as beta-D-xyosyl-(1&lt;-&gt;1')-N-acylsphing-4-enine) is not a good substrate for hydrolysis, however it is a good xylose donor for transxylosylation activity to form cholesteryl 3-beta-D-xyloside. This Sus scrofa (Pig) protein is Lysosomal acid glucosylceramidase (GBA1).